We begin with the raw amino-acid sequence, 348 residues long: MMESRHAQRKNEHLSLAAKYYDQVHQHHYFDQVRLIHDSLPEMTTDDVDLHVQLADNLEIECPFYIEAMTGGSDQALKINRQLAQLAHKHHLAMATGSLSIISKDPQSFSSFEIIREENPDGIIFANLSANASLDQAINAISLLKANALELHINAAQELIMPEGDRDFNWLDNIQYLVSELEVPVIVKEVGFGMSKTTIAKLQTHDVHLINVSGRGGTNFAAIENRRNHDINFESLLDWGQTTPESLLEAHSIRRGKTEIIASGGITSPLDVIKAGVLGARAVGVAGYFLNILQNEGYEALDQTLGEWQVIVKRLLALLGCSSFTVLSRVEYVLGTDLLSYARQRHLR.

Substrate is bound at residue 9-10; the sequence is RK. FMN-binding positions include 68–70, Ser98, and Asn127; that span reads AMT. Gln157 contributes to the substrate binding site. Glu158 is a binding site for Mg(2+). Residues Lys188, Ser213, Thr218, and 286–287 contribute to the FMN site; that span reads AG.

It belongs to the IPP isomerase type 2 family. Homooctamer. Dimer of tetramers. FMN is required as a cofactor. It depends on NADPH as a cofactor. The cofactor is Mg(2+).

Its subcellular location is the cytoplasm. The catalysed reaction is isopentenyl diphosphate = dimethylallyl diphosphate. Involved in the biosynthesis of isoprenoids. Catalyzes the 1,3-allylic rearrangement of the homoallylic substrate isopentenyl (IPP) to its allylic isomer, dimethylallyl diphosphate (DMAPP). The chain is Isopentenyl-diphosphate delta-isomerase from Limosilactobacillus reuteri (strain DSM 20016) (Lactobacillus reuteri).